A 739-amino-acid chain; its full sequence is Phosphoribosylformylglycinamidine synthase subunit PurL (739 aa).

Residue H54 is part of the active site. The ATP site is built by Y57 and K96. E98 contributes to the Mg(2+) binding site. Substrate-binding positions include 99-102 (SHNH) and R121. The Proton acceptor role is filled by H100. D122 lines the Mg(2+) pocket. Q245 contributes to the substrate binding site. D273 serves as a coordination point for Mg(2+). 317-319 (ESQ) contacts substrate. 2 residues coordinate ATP: D500 and G537. N538 is a binding site for Mg(2+). A substrate-binding site is contributed by S540.

It belongs to the FGAMS family. Monomer. Part of the FGAM synthase complex composed of 1 PurL, 1 PurQ and 2 PurS subunits.

The protein localises to the cytoplasm. The catalysed reaction is N(2)-formyl-N(1)-(5-phospho-beta-D-ribosyl)glycinamide + L-glutamine + ATP + H2O = 2-formamido-N(1)-(5-O-phospho-beta-D-ribosyl)acetamidine + L-glutamate + ADP + phosphate + H(+). The protein operates within purine metabolism; IMP biosynthesis via de novo pathway; 5-amino-1-(5-phospho-D-ribosyl)imidazole from N(2)-formyl-N(1)-(5-phospho-D-ribosyl)glycinamide: step 1/2. In terms of biological role, part of the phosphoribosylformylglycinamidine synthase complex involved in the purines biosynthetic pathway. Catalyzes the ATP-dependent conversion of formylglycinamide ribonucleotide (FGAR) and glutamine to yield formylglycinamidine ribonucleotide (FGAM) and glutamate. The FGAM synthase complex is composed of three subunits. PurQ produces an ammonia molecule by converting glutamine to glutamate. PurL transfers the ammonia molecule to FGAR to form FGAM in an ATP-dependent manner. PurS interacts with PurQ and PurL and is thought to assist in the transfer of the ammonia molecule from PurQ to PurL. The protein is Phosphoribosylformylglycinamidine synthase subunit PurL of Bacillus mycoides (strain KBAB4) (Bacillus weihenstephanensis).